The following is a 265-amino-acid chain: Glutamate racemase (265 aa).

Substrate is bound by residues Asp9–Ser10 and Tyr41–Gly42. Cys72 (proton donor/acceptor) is an active-site residue. Asn73 to Thr74 contacts substrate. Catalysis depends on Cys183, which acts as the Proton donor/acceptor. Thr184 to His185 provides a ligand contact to substrate.

Belongs to the aspartate/glutamate racemases family.

The catalysed reaction is L-glutamate = D-glutamate. It participates in cell wall biogenesis; peptidoglycan biosynthesis. In terms of biological role, provides the (R)-glutamate required for cell wall biosynthesis. The sequence is that of Glutamate racemase from Lysinibacillus sphaericus (Bacillus sphaericus).